The sequence spans 503 residues: Putative acyl--CoA ligase YdaB (503 aa).

The protein belongs to the ATP-dependent AMP-binding enzyme family.

This is Putative acyl--CoA ligase YdaB (ydaB) from Bacillus subtilis (strain 168).